Here is a 512-residue protein sequence, read N- to C-terminus: Cytochrome P450 1A1 (512 aa).

Residues 29-40 (SRPRVPKGLKNP) form a mitochondrial targeting signal region. An O-linked (GlcNAc) serine glycan is attached at Ser67. A substrate-binding site is contributed by Phe224. Cys457 is a binding site for heme.

Belongs to the cytochrome P450 family. As to quaternary structure, interacts with cytosolic chaperones HSP70 and HSP90; this interaction is required for initial targeting to mitochondria. Interacts (via mitochondrial targeting signal) with TOMM40 (via N-terminus); this interaction is required for translocation across the mitochondrial outer membrane. Heme is required as a cofactor.

It is found in the endoplasmic reticulum membrane. It localises to the mitochondrion inner membrane. The protein resides in the microsome membrane. The protein localises to the cytoplasm. It carries out the reaction an organic molecule + reduced [NADPH--hemoprotein reductase] + O2 = an alcohol + oxidized [NADPH--hemoprotein reductase] + H2O + H(+). The enzyme catalyses estrone + reduced [NADPH--hemoprotein reductase] + O2 = 2-hydroxyestrone + oxidized [NADPH--hemoprotein reductase] + H2O + H(+). The catalysed reaction is estrone + reduced [NADPH--hemoprotein reductase] + O2 = 4-hydroxyestrone + oxidized [NADPH--hemoprotein reductase] + H2O + H(+). It catalyses the reaction estrone + reduced [NADPH--hemoprotein reductase] + O2 = 6alpha-hydroxyestrone + oxidized [NADPH--hemoprotein reductase] + H2O + H(+). It carries out the reaction estrone + reduced [NADPH--hemoprotein reductase] + O2 = 15alpha-hydroxyestrone + oxidized [NADPH--hemoprotein reductase] + H2O + H(+). The enzyme catalyses estrone + reduced [NADPH--hemoprotein reductase] + O2 = 16alpha-hydroxyestrone + oxidized [NADPH--hemoprotein reductase] + H2O + H(+). The catalysed reaction is 17beta-estradiol + reduced [NADPH--hemoprotein reductase] + O2 = 2-hydroxy-17beta-estradiol + oxidized [NADPH--hemoprotein reductase] + H2O + H(+). It catalyses the reaction 17beta-estradiol + reduced [NADPH--hemoprotein reductase] + O2 = 4-hydroxy-17beta-estradiol + oxidized [NADPH--hemoprotein reductase] + H2O + H(+). It carries out the reaction 17beta-estradiol + reduced [NADPH--hemoprotein reductase] + O2 = 6alpha-hydroxy-17beta-estradiol + oxidized [NADPH--hemoprotein reductase] + H2O + H(+). The enzyme catalyses 17beta-estradiol + reduced [NADPH--hemoprotein reductase] + O2 = 7alpha-hydroxy-17beta-estradiol + oxidized [NADPH--hemoprotein reductase] + H2O + H(+). The catalysed reaction is 17beta-estradiol + reduced [NADPH--hemoprotein reductase] + O2 = 15alpha-hydroxy-17beta-estradiol + oxidized [NADPH--hemoprotein reductase] + H2O + H(+). It catalyses the reaction (5Z,8Z,11Z)-eicosatrienoate + reduced [NADPH--hemoprotein reductase] + O2 = 19-hydroxy-(5Z,8Z,11Z)-eicosatrienoate + oxidized [NADPH--hemoprotein reductase] + H2O + H(+). It carries out the reaction (5Z,8Z,11Z,14Z)-eicosatetraenoate + reduced [NADPH--hemoprotein reductase] + O2 = 16-hydroxy-(5Z,8Z,11Z,14Z)-eicosatetraenoate + oxidized [NADPH--hemoprotein reductase] + H2O + H(+). The enzyme catalyses (5Z,8Z,11Z,14Z)-eicosatetraenoate + reduced [NADPH--hemoprotein reductase] + O2 = 17-hydroxy-(5Z,8Z,11Z,14Z)-eicosatetraenoate + oxidized [NADPH--hemoprotein reductase] + H2O + H(+). The catalysed reaction is (5Z,8Z,11Z,14Z)-eicosatetraenoate + reduced [NADPH--hemoprotein reductase] + O2 = 18-hydroxy-(5Z,8Z,11Z,14Z)-eicosatetraenoate + oxidized [NADPH--hemoprotein reductase] + H2O + H(+). It catalyses the reaction (5Z,8Z,11Z,14Z)-eicosatetraenoate + reduced [NADPH--hemoprotein reductase] + O2 = 19-hydroxy-(5Z,8Z,11Z,14Z)-eicosatetraenoate + oxidized [NADPH--hemoprotein reductase] + H2O + H(+). It carries out the reaction (5Z,8Z,11Z,14Z,17Z)-eicosapentaenoate + reduced [NADPH--hemoprotein reductase] + O2 = 19-hydroxy-(5Z,8Z,11Z,14Z,17Z)-eicosapentaenoate + oxidized [NADPH--hemoprotein reductase] + H2O + H(+). The enzyme catalyses (5Z,8Z,11Z,14Z)-eicosatetraenoate + reduced [NADPH--hemoprotein reductase] + O2 = (8R,9S)-epoxy-(5Z,11Z,14Z)-eicosatrienoate + oxidized [NADPH--hemoprotein reductase] + H2O + H(+). The catalysed reaction is (5Z,8Z,11Z,14Z)-eicosatetraenoate + reduced [NADPH--hemoprotein reductase] + O2 = (11R,12S)-epoxy-(5Z,8Z,14Z)-eicosatrienoate + oxidized [NADPH--hemoprotein reductase] + H2O + H(+). It catalyses the reaction (5Z,8Z,11Z,14Z)-eicosatetraenoate + reduced [NADPH--hemoprotein reductase] + O2 = (14S,15R)-epoxy-(5Z,8Z,11Z)-eicosatrienoate + oxidized [NADPH--hemoprotein reductase] + H2O + H(+). It carries out the reaction (5Z,8Z,11Z,14Z)-eicosatetraenoate + reduced [NADPH--hemoprotein reductase] + O2 = (14R,15S)-epoxy-(5Z,8Z,11Z)-eicosatrienoate + oxidized [NADPH--hemoprotein reductase] + H2O + H(+). The enzyme catalyses (5Z,8Z,11Z,14Z,17Z)-eicosapentaenoate + reduced [NADPH--hemoprotein reductase] + O2 = (17R,18S)-epoxy-(5Z,8Z,11Z,14Z)-eicosatetraenoate + oxidized [NADPH--hemoprotein reductase] + H2O + H(+). The catalysed reaction is (4Z,7Z,10Z,13Z,16Z,19Z)-docosahexaenoate + reduced [NADPH--hemoprotein reductase] + O2 = (19S,20R)-epoxy-(4Z,7Z,10Z,13Z,16Z)-docosapentaenoate + oxidized [NADPH--hemoprotein reductase] + H2O + H(+). It catalyses the reaction (4Z,7Z,10Z,13Z,16Z,19Z)-docosahexaenoate + reduced [NADPH--hemoprotein reductase] + O2 = (19R,20S)-epoxy-(4Z,7Z,10Z,13Z,16Z)-docosapentaenoate + oxidized [NADPH--hemoprotein reductase] + H2O + H(+). It carries out the reaction all-trans-retinol + reduced [NADPH--hemoprotein reductase] + O2 = all-trans-retinal + oxidized [NADPH--hemoprotein reductase] + 2 H2O + H(+). The enzyme catalyses all-trans-retinal + reduced [NADPH--hemoprotein reductase] + O2 = all-trans-retinoate + oxidized [NADPH--hemoprotein reductase] + H2O + 2 H(+). The catalysed reaction is (13S)-hydroperoxy-(9Z,11E)-octadecadienoate = 13-oxo-(9Z,11E)-octadecadienoate + H2O. It catalyses the reaction (12S)-hydroperoxy-(5Z,8Z,10E,14Z)-eicosatetraenoate = 12-oxo-(5Z,8Z,10E,14Z)-eicosatetraenoate + H2O. It carries out the reaction (15S)-hydroperoxy-(5Z,8Z,11Z,13E)-eicosatetraenoate = 15-oxo-(5Z,8Z,11Z,13E)-eicosatetraenoate + H2O. The enzyme catalyses (5S)-hydroperoxy-(6E,8Z,11Z,14Z)-eicosatetraenoate = 5-oxo-(6E,8Z,11Z,14Z)-eicosatetraenoate + H2O. It functions in the pathway steroid hormone biosynthesis. Its pathway is lipid metabolism; fatty acid metabolism. The protein operates within cofactor metabolism; retinol metabolism. Its function is as follows. A cytochrome P450 monooxygenase involved in the metabolism of various endogenous substrates, including fatty acids, steroid hormones and vitamins. Mechanistically, uses molecular oxygen inserting one oxygen atom into a substrate, and reducing the second into a water molecule, with two electrons provided by NADPH via cytochrome P450 reductase (CPR; NADPH-ferrihemoprotein reductase). Catalyzes the hydroxylation of carbon-hydrogen bonds. Exhibits high catalytic activity for the formation of hydroxyestrogens from estrone (E1) and 17beta-estradiol (E2), namely 2-hydroxy E1 and E2, as well as D-ring hydroxylated E1 and E2 at the C15alpha and C16alpha positions. Displays different regioselectivities for polyunsaturated fatty acids (PUFA) hydroxylation. Catalyzes the epoxidation of double bonds of certain PUFA. Converts arachidonic acid toward epoxyeicosatrienoic acid (EET) regioisomers, 8,9-, 11,12-, and 14,15-EET, that function as lipid mediators in the vascular system. Displays an absolute stereoselectivity in the epoxidation of eicosapentaenoic acid (EPA) producing the 17(R),18(S) enantiomer. May play an important role in all-trans retinoic acid biosynthesis in extrahepatic tissues. Catalyzes two successive oxidative transformation of all-trans retinol to all-trans retinal and then to the active form all-trans retinoic acid. May also participate in eicosanoids metabolism by converting hydroperoxide species into oxo metabolites (lipoxygenase-like reaction, NADPH-independent). The chain is Cytochrome P450 1A1 (CYP1A1) from Macaca mulatta (Rhesus macaque).